Consider the following 833-residue polypeptide: Probable serine/threonine-protein kinase DDB_G0277165 (833 aa).

The 254-residue stretch at 9–262 folds into the Protein kinase domain; it reads FIIGKTLGQG…IKEIKEHPWF (254 aa). ATP contacts are provided by residues 15 to 23 and K38; that span reads LGQGTTGKV. The active-site Proton acceptor is D133. In terms of domain architecture, UBA spans 288–329; that stretch reads QIDEDIFRSLMALGVGTIDEVKQQLVSNQKSATLIYYRLLEE. The span at 338-351 shows a compositional bias: basic and acidic residues; sequence NKYGYKPKETRRNS. Disordered regions lie at residues 338-472, 528-626, and 764-799; these read NKYG…ISPS, QALQ…PIEI, and FINPVSPSKQHHHHHHQQQQPQQQQMPPLNLNGGQN. Low complexity-rich tracts occupy residues 365–432 and 441–459; these read NNNN…NNNN and SSSQQPPHIQQPHSQQIPS. Over residues 460–472 the composition is skewed to polar residues; that stretch reads NSTSQESMQISPS. A compositionally biased stretch (low complexity) spans 528–589; sequence QALQQHHQQQ…SSTSTSPQLS (62 aa). Residues 600-625 are compositionally biased toward polar residues; sequence GSMTASTNPATSPTMSHRGKTSSPIE.

The protein belongs to the protein kinase superfamily. CAMK Ser/Thr protein kinase family.

It catalyses the reaction L-seryl-[protein] + ATP = O-phospho-L-seryl-[protein] + ADP + H(+). It carries out the reaction L-threonyl-[protein] + ATP = O-phospho-L-threonyl-[protein] + ADP + H(+). This is Probable serine/threonine-protein kinase DDB_G0277165 from Dictyostelium discoideum (Social amoeba).